Consider the following 394-residue polypeptide: Dual-specificity RNA methyltransferase RlmN (394 aa).

Glu-115 functions as the Proton acceptor in the catalytic mechanism. A Radical SAM core domain is found at Glu-121–Asp-360. An intrachain disulfide couples Cys-128 to Cys-365. Residues Cys-135, Cys-139, and Cys-142 each contribute to the [4Fe-4S] cluster site. S-adenosyl-L-methionine contacts are provided by residues Gly-189–Glu-190, Ser-221, Ser-243–His-245, and Asn-322. Cys-365 acts as the S-methylcysteine intermediate in catalysis.

This sequence belongs to the radical SAM superfamily. RlmN family. [4Fe-4S] cluster is required as a cofactor.

The protein localises to the cytoplasm. The catalysed reaction is adenosine(2503) in 23S rRNA + 2 reduced [2Fe-2S]-[ferredoxin] + 2 S-adenosyl-L-methionine = 2-methyladenosine(2503) in 23S rRNA + 5'-deoxyadenosine + L-methionine + 2 oxidized [2Fe-2S]-[ferredoxin] + S-adenosyl-L-homocysteine. It carries out the reaction adenosine(37) in tRNA + 2 reduced [2Fe-2S]-[ferredoxin] + 2 S-adenosyl-L-methionine = 2-methyladenosine(37) in tRNA + 5'-deoxyadenosine + L-methionine + 2 oxidized [2Fe-2S]-[ferredoxin] + S-adenosyl-L-homocysteine. Its function is as follows. Specifically methylates position 2 of adenine 2503 in 23S rRNA and position 2 of adenine 37 in tRNAs. m2A2503 modification seems to play a crucial role in the proofreading step occurring at the peptidyl transferase center and thus would serve to optimize ribosomal fidelity. This Pasteurella multocida (strain Pm70) protein is Dual-specificity RNA methyltransferase RlmN.